The sequence spans 100 residues: Small ribosomal subunit protein uS14c (100 aa).

This sequence belongs to the universal ribosomal protein uS14 family. In terms of assembly, part of the 30S ribosomal subunit.

It is found in the plastid. The protein localises to the chloroplast. Binds 16S rRNA, required for the assembly of 30S particles. This Fagopyrum esculentum subsp. ancestrale (Wild buckwheat) protein is Small ribosomal subunit protein uS14c.